The sequence spans 49 residues: Large ribosomal subunit protein bL33 (49 aa).

This sequence belongs to the bacterial ribosomal protein bL33 family.

The polypeptide is Large ribosomal subunit protein bL33 (Syntrophus aciditrophicus (strain SB)).